A 193-amino-acid polypeptide reads, in one-letter code: NADH-quinone oxidoreductase subunit B (193 aa).

Residues 1 to 25 (MGLNDSSGTLVAPKPKGIIDPNTGR) form a disordered region. [4Fe-4S] cluster is bound by residues cysteine 72, cysteine 73, cysteine 137, and cysteine 167.

The protein belongs to the complex I 20 kDa subunit family. As to quaternary structure, NDH-1 is composed of 14 different subunits. Subunits NuoB, C, D, E, F, and G constitute the peripheral sector of the complex. [4Fe-4S] cluster is required as a cofactor.

The protein resides in the cell inner membrane. It catalyses the reaction a quinone + NADH + 5 H(+)(in) = a quinol + NAD(+) + 4 H(+)(out). NDH-1 shuttles electrons from NADH, via FMN and iron-sulfur (Fe-S) centers, to quinones in the respiratory chain. Couples the redox reaction to proton translocation (for every two electrons transferred, four hydrogen ions are translocated across the cytoplasmic membrane), and thus conserves the redox energy in a proton gradient. This Mesorhizobium japonicum (strain LMG 29417 / CECT 9101 / MAFF 303099) (Mesorhizobium loti (strain MAFF 303099)) protein is NADH-quinone oxidoreductase subunit B.